A 498-amino-acid polypeptide reads, in one-letter code: Hexokinase-3 (498 aa).

A helical membrane pass occupies residues 4–24; it reads VAVAFAAVAVVAACSVAAVMV. In terms of domain architecture, Hexokinase spans 35 to 494; sequence RTVVEILKEL…SSIGSALLVA (460 aa). The segment at 90–227 is hexokinase small subdomain; that stretch reads TGREKGTYYA…GLDMHVAALV (138 aa). ADP contacts are provided by Gly-104 and Thr-105. D-glucose is bound by residues Thr-193, Lys-194, Asn-228, and Asp-229. A hexokinase large subdomain region spans residues 228–483; that stretch reads NDTVGALSLG…QYVVVKAMED (256 aa). Residue Thr-252 coordinates ADP. D-glucose contacts are provided by Asn-255, Glu-283, and Glu-314. Gly-448 lines the ADP pocket.

This sequence belongs to the hexokinase family. As to expression, expressed in roots, emerging lateral roots, vascular tissues of cotyledons, roots and leaves, root and shoot meristems, anther filaments and funiculi of mature seeds.

Its subcellular location is the mitochondrion outer membrane. The enzyme catalyses a D-hexose + ATP = a D-hexose 6-phosphate + ADP + H(+). The catalysed reaction is D-fructose + ATP = D-fructose 6-phosphate + ADP + H(+). It catalyses the reaction D-glucose + ATP = D-glucose 6-phosphate + ADP + H(+). It participates in carbohydrate metabolism; hexose metabolism. The protein operates within carbohydrate degradation; glycolysis; D-glyceraldehyde 3-phosphate and glycerone phosphate from D-glucose: step 1/4. In terms of biological role, fructose and glucose phosphorylating enzyme. May be involved in the phosphorylation of glucose during the export from mitochondrion to cytosol. Plays a role in plant growth and development, perhaps by mediating cross-talk between glucose and hormone response pathways. Involved in root hair cell development by mediating certain aspects of cross talk between glucose and ethylene response pathways. In Arabidopsis thaliana (Mouse-ear cress), this protein is Hexokinase-3.